Reading from the N-terminus, the 231-residue chain is Ribonuclease 3 (231 aa).

The region spanning 8–135 is the RNase III domain; that stretch reads VGDLERRIGH…LMAALYQDGG (128 aa). E48 is a Mg(2+) binding site. Residues D52 and E124 contribute to the active site. E124 lines the Mg(2+) pocket. In terms of domain architecture, DRBM spans 161–230; it reads DPKTALQEWA…AKALLEREGA (70 aa). The interval 210–231 is disordered; that stretch reads GKSRQEAEKAAAKALLEREGAG. Basic and acidic residues predominate over residues 212-231; it reads SRQEAEKAAAKALLEREGAG.

Belongs to the ribonuclease III family. As to quaternary structure, homodimer. The cofactor is Mg(2+).

It is found in the cytoplasm. It catalyses the reaction Endonucleolytic cleavage to 5'-phosphomonoester.. Digests double-stranded RNA. Involved in the processing of primary rRNA transcript to yield the immediate precursors to the large and small rRNAs (23S and 16S). Processes some mRNAs, and tRNAs when they are encoded in the rRNA operon. Processes pre-crRNA and tracrRNA of type II CRISPR loci if present in the organism. In Caulobacter vibrioides (strain ATCC 19089 / CIP 103742 / CB 15) (Caulobacter crescentus), this protein is Ribonuclease 3.